Reading from the N-terminus, the 117-residue chain is Large ribosomal subunit protein bL20c (117 aa).

It belongs to the bacterial ribosomal protein bL20 family.

It is found in the plastid. Its subcellular location is the chloroplast. In terms of biological role, binds directly to 23S ribosomal RNA and is necessary for the in vitro assembly process of the 50S ribosomal subunit. It is not involved in the protein synthesizing functions of that subunit. The sequence is that of Large ribosomal subunit protein bL20c from Platanus occidentalis (Sycamore).